The sequence spans 664 residues: Putative peroxisomal acyl-coenzyme A oxidase 1.2 (664 aa).

399–404 contacts FAD; that stretch reads CGGHGY. The Microbody targeting signal signature appears at 662 to 664; the sequence is AKL.

Belongs to the acyl-CoA oxidase family. FAD is required as a cofactor.

Its subcellular location is the peroxisome. The catalysed reaction is a 2,3-saturated acyl-CoA + O2 = a (2E)-enoyl-CoA + H2O2. Catalyzes the desaturation of acyl-CoAs to 2-trans-enoyl-CoAs. The chain is Putative peroxisomal acyl-coenzyme A oxidase 1.2 (ACX1.2) from Arabidopsis thaliana (Mouse-ear cress).